Consider the following 108-residue polypeptide: Immunoglobulin kappa variable 11-125 (108 aa).

The interval 1–23 is framework-1; it reads DVQMIQSPSSLSASLGDIVTMTC. A disulfide bridge links Cys23 with Cys88. Residues 24 to 34 form a complementarity-determining-1 region; sequence QASQGTSINLN. Residues 35–49 are framework-2; it reads WFQQKPGKAPKLLIY. Residues 50–56 form a complementarity-determining-2 region; it reads GASILED. Positions 57 to 88 are framework-3; the sequence is GVPSRFSGSRYGTDFTLTISSLEDEDMATYFC. Residues 89–97 are complementarity-determining-3; it reads LQHSYLPYT. Residues 98–108 form a framework-4 region; the sequence is FGGGTKLEIKR.

This is Immunoglobulin kappa variable 11-125 from Mus musculus (Mouse).